The following is a 1298-amino-acid chain: Phosphoribosylformylglycinamidine synthase (1298 aa).

The tract at residues 303-327 is disordered; it reads FPGAATGSGGEIRDEGATGRGAKPK. Residues 305–316, 384–386, and Ala-676 each bind ATP; these read GAATGSGGEIRD and TGY. Asp-677, Glu-716, Asn-720, and Asp-884 together coordinate Mg(2+). Residue Ser-886 participates in ATP binding. A Glutamine amidotransferase type-1 domain is found at 1045–1298; that stretch reads VAVLREQGVN…MFRNARAWVN (254 aa). Cys-1138 (nucleophile) is an active-site residue. Residues His-1263 and Glu-1265 contribute to the active site.

The protein in the N-terminal section; belongs to the FGAMS family. In terms of assembly, monomer.

The protein localises to the cytoplasm. It catalyses the reaction N(2)-formyl-N(1)-(5-phospho-beta-D-ribosyl)glycinamide + L-glutamine + ATP + H2O = 2-formamido-N(1)-(5-O-phospho-beta-D-ribosyl)acetamidine + L-glutamate + ADP + phosphate + H(+). It functions in the pathway purine metabolism; IMP biosynthesis via de novo pathway; 5-amino-1-(5-phospho-D-ribosyl)imidazole from N(2)-formyl-N(1)-(5-phospho-D-ribosyl)glycinamide: step 1/2. In terms of biological role, phosphoribosylformylglycinamidine synthase involved in the purines biosynthetic pathway. Catalyzes the ATP-dependent conversion of formylglycinamide ribonucleotide (FGAR) and glutamine to yield formylglycinamidine ribonucleotide (FGAM) and glutamate. The protein is Phosphoribosylformylglycinamidine synthase of Pseudomonas savastanoi pv. phaseolicola (strain 1448A / Race 6) (Pseudomonas syringae pv. phaseolicola (strain 1448A / Race 6)).